The sequence spans 138 residues: Small ribosomal subunit protein uS9 (138 aa).

Over residues 100–118 (PENRPPLKTEGYLTRDPRA) the composition is skewed to basic and acidic residues. The tract at residues 100-138 (PENRPPLKTEGYLTRDPRAKERKKYGLHKARKAPQYSKR) is disordered. The span at 119 to 138 (KERKKYGLHKARKAPQYSKR) shows a compositional bias: basic residues.

This sequence belongs to the universal ribosomal protein uS9 family.

The polypeptide is Small ribosomal subunit protein uS9 (Trichormus variabilis (strain ATCC 29413 / PCC 7937) (Anabaena variabilis)).